We begin with the raw amino-acid sequence, 211 residues long: Protein-L-isoaspartate O-methyltransferase 1 (211 aa).

The active site involves S62.

This sequence belongs to the methyltransferase superfamily. L-isoaspartyl/D-aspartyl protein methyltransferase family.

Its subcellular location is the cytoplasm. It carries out the reaction [protein]-L-isoaspartate + S-adenosyl-L-methionine = [protein]-L-isoaspartate alpha-methyl ester + S-adenosyl-L-homocysteine. Functionally, catalyzes the methyl esterification of L-isoaspartyl residues in peptides and proteins that result from spontaneous decomposition of normal L-aspartyl and L-asparaginyl residues. It plays a role in the repair and/or degradation of damaged proteins. The polypeptide is Protein-L-isoaspartate O-methyltransferase 1 (Shewanella sediminis (strain HAW-EB3)).